Consider the following 357-residue polypeptide: Protein NDRG2 (357 aa).

The segment covering 1–14 (MAELREVQITEEKP) has biased composition (basic and acidic residues). Residues 1–26 (MAELREVQITEEKPLLPGQTPEVAKT) are disordered. Ala-2 is modified (N-acetylalanine). Thr-20 carries the post-translational modification Phosphothreonine. A phosphoserine mark is found at Ser-312 and Ser-314. Thr-316 carries the phosphothreonine modification. Position 318 is a phosphoserine (Ser-318). Thr-320 bears the Phosphothreonine mark. The segment at 320–357 (TSAASIDGNRSRSRTLSQSSESGTLSSGPPGHTMEVSC) is disordered. Phosphoserine occurs at positions 321, 324, and 330. A compositionally biased stretch (low complexity) spans 333–347 (RTLSQSSESGTLSSG). Thr-334 bears the Phosphothreonine mark. 4 positions are modified to phosphoserine: Ser-336, Ser-338, Ser-339, and Ser-341. The residue at position 343 (Thr-343) is a Phosphothreonine. Ser-356 carries the post-translational modification Phosphoserine.

Belongs to the NDRG family. In terms of assembly, interacts with CTNNB1.

The protein resides in the cytoplasm. Its subcellular location is the perinuclear region. It localises to the cell projection. The protein localises to the growth cone. Contributes to the regulation of the Wnt signaling pathway. Down-regulates CTNNB1-mediated transcriptional activation of target genes, such as CCND1, and may thereby act as tumor suppressor. May be involved in dendritic cell and neuron differentiation. The polypeptide is Protein NDRG2 (NDRG2) (Bos taurus (Bovine)).